Consider the following 353-residue polypeptide: Photosystem II protein D1 (353 aa).

Thr2 carries the N-acetylthreonine modification. Thr2 bears the Phosphothreonine mark. The next 3 membrane-spanning stretches (helical) occupy residues 29-46 (YIGW…TATS), 118-133 (HFLL…EWEL), and 142-156 (WIAV…AATA). Position 118 (His118) interacts with chlorophyll a. Position 126 (Tyr126) interacts with pheophytin a. The [CaMn4O5] cluster site is built by Asp170 and Glu189. Residues 197-218 (FHMLGVAGVFGGSLFSAMHGSL) traverse the membrane as a helical segment. His198 contributes to the chlorophyll a binding site. Residues His215 and 264–265 (SF) contribute to the a quinone site. His215 is a binding site for Fe cation. Residue His272 coordinates Fe cation. The helical transmembrane segment at 274–288 (FLAAWPVVCIWFTAL) threads the bilayer. Residues His332, Glu333, Asp342, and Ala344 each coordinate [CaMn4O5] cluster. Positions 345–353 (SVDAPAVQG) are excised as a propeptide.

This sequence belongs to the reaction center PufL/M/PsbA/D family. As to quaternary structure, PSII is composed of 1 copy each of membrane proteins PsbA, PsbB, PsbC, PsbD, PsbE, PsbF, PsbH, PsbI, PsbJ, PsbK, PsbL, PsbM, PsbT, PsbX, PsbY, PsbZ, Psb30/Ycf12, at least 3 peripheral proteins of the oxygen-evolving complex and a large number of cofactors. It forms dimeric complexes. The D1/D2 heterodimer binds P680, chlorophylls that are the primary electron donor of PSII, and subsequent electron acceptors. It shares a non-heme iron and each subunit binds pheophytin, quinone, additional chlorophylls, carotenoids and lipids. D1 provides most of the ligands for the Mn4-Ca-O5 cluster of the oxygen-evolving complex (OEC). There is also a Cl(-1) ion associated with D1 and D2, which is required for oxygen evolution. The PSII complex binds additional chlorophylls, carotenoids and specific lipids. is required as a cofactor. In terms of processing, tyr-161 forms a radical intermediate that is referred to as redox-active TyrZ, YZ or Y-Z. C-terminally processed by CTPA; processing is essential to allow assembly of the oxygen-evolving complex and thus photosynthetic growth.

The protein resides in the plastid. The protein localises to the chloroplast thylakoid membrane. It carries out the reaction 2 a plastoquinone + 4 hnu + 2 H2O = 2 a plastoquinol + O2. Photosystem II (PSII) is a light-driven water:plastoquinone oxidoreductase that uses light energy to abstract electrons from H(2)O, generating O(2) and a proton gradient subsequently used for ATP formation. It consists of a core antenna complex that captures photons, and an electron transfer chain that converts photonic excitation into a charge separation. The D1/D2 (PsbA/PsbD) reaction center heterodimer binds P680, the primary electron donor of PSII as well as several subsequent electron acceptors. The polypeptide is Photosystem II protein D1 (Nephroselmis olivacea (Green alga)).